We begin with the raw amino-acid sequence, 411 residues long: Chorismate synthase (411 aa).

Residues R40 and R46 each contribute to the NADP(+) site. Residues 135–137 (RAS) and 256–257 (QA) each bind FMN. Positions 278–299 (HDGIARGADGRPRRTSDRAGGI) are disordered. Over residues 285–294 (ADGRPRRTSD) the composition is skewed to basic and acidic residues. FMN-binding positions include A301, 316–320 (KPIAT), and R342.

Belongs to the chorismate synthase family. As to quaternary structure, homotetramer. FMNH2 serves as cofactor.

The catalysed reaction is 5-O-(1-carboxyvinyl)-3-phosphoshikimate = chorismate + phosphate. Its pathway is metabolic intermediate biosynthesis; chorismate biosynthesis; chorismate from D-erythrose 4-phosphate and phosphoenolpyruvate: step 7/7. Catalyzes the anti-1,4-elimination of the C-3 phosphate and the C-6 proR hydrogen from 5-enolpyruvylshikimate-3-phosphate (EPSP) to yield chorismate, which is the branch point compound that serves as the starting substrate for the three terminal pathways of aromatic amino acid biosynthesis. This reaction introduces a second double bond into the aromatic ring system. The chain is Chorismate synthase from Micrococcus luteus (strain ATCC 4698 / DSM 20030 / JCM 1464 / CCM 169 / CCUG 5858 / IAM 1056 / NBRC 3333 / NCIMB 9278 / NCTC 2665 / VKM Ac-2230) (Micrococcus lysodeikticus).